The primary structure comprises 265 residues: RNA-binding protein 7 (265 aa).

Glycine 2 is subject to N-acetylglycine. The region spanning 10-87 (RTLFVGNLET…RPIKIQFRSG (78 aa)) is the RRM domain. ZCCHC8 binding stretches follow at residues 25 to 35 (LLFELFHQAGP) and 59 to 76 (HEVS…IKLF). The tract at residues 91-125 (ASQDASVSYPQHHVGNLSPTSTSPNSYERTVGNVS) is disordered. Polar residues predominate over residues 107-125 (LSPTSTSPNSYERTVGNVS). Serine 136 is modified (phosphoserine; by MAPKAPK2). The residue at position 137 (serine 137) is a Phosphoserine. Arginine 152 bears the Omega-N-methylarginine mark. 2 disordered regions span residues 166–224 (DQLG…HGSD) and 237–265 (DDRN…SSRH). Residues 170–196 (FSPSAQPHGHTFNQSSSSQWRQDALSS) are compositionally biased toward polar residues. A Phosphoserine modification is found at serine 203. Composition is skewed to basic and acidic residues over residues 207 to 224 (LADR…HGSD) and 237 to 256 (DDRN…DSSR).

Component of the nuclear exosome targeting (NEXT) complex composed of MTREX, ZCCHC8, and RBM7 that directs a subset of non-coding short-lived RNAs for exosomal degradation. Interacts with ZCCHC8 and SF3B2/SAP145. Binds to MTREX through ZCCHC8. Interacts with YWHAE and YWHAZ; these interactions are stress-dependent and RBM7 phosphorylation dependent; release RNA from the NEXT complex and may affect RNA targeting to the nuclear RNA exosomome for degradation. Interacts with MEPCE and LARP7, the core subunits of 7SK snRNP; upon genotoxic stress this interaction is enhanced, triggering the release of inactive P-TEFb complex from the core and P-TEFb complex activation. Post-translationally, phosphorylated at Ser-136 by MAPK14/p38-alpha-activated MAPKAPK2/MK2; this phosphorylation is stress-dependent; this phosphorylation decreases its RNA-binding capacity therefore affecting RNA nuclear exosome-mediated degradation. This phosphorylation mediates YWHAE and YWHAZ interactions.

Its subcellular location is the nucleus. The protein resides in the nucleoplasm. Its function is as follows. RNA-binding subunit of the trimeric nuclear exosome targeting (NEXT) complex, a complex that functions as an RNA exosome cofactor that directs a subset of non-coding short-lived RNAs for exosomal degradation. NEXT is involved in surveillance and turnover of aberrant transcripts and non-coding RNAs. Binds preferentially polyuridine sequences and associates with newly synthesized RNAs, including pre-mRNAs and short-lived exosome substrates such as promoter upstream transcripts (PROMPTs), enhancer RNAs (eRNAs), and 3'-extended products from small nuclear RNAs (snRNAs). Participates in several biological processes including DNA damage response (DDR) and stress response. During stress response, activation of the p38MAPK-MK2 pathway decreases RBM7-RNA-binding and subsequently the RNA exosome degradation activities, thereby modulating the turnover of non-coding transcriptome. Participates in DNA damage response (DDR), through its interaction with MEPCE and LARP7, the core subunits of 7SK snRNP complex, that release the positive transcription elongation factor b (P-TEFb) complex from the 7SK snRNP. In turn, activation of P-TEFb complex induces the transcription of P-TEFb-dependent DDR genes to promote cell viability. This chain is RNA-binding protein 7, found in Mus musculus (Mouse).